Here is a 379-residue protein sequence, read N- to C-terminus: Cysteine-rich receptor-like protein kinase 44 (379 aa).

Residues 56-336 (FSPYNHLGEG…VRMLNANSFT (281 aa)) enclose the Protein kinase domain. ATP contacts are provided by residues 62 to 70 (LGEGGFGAV) and Lys-84. Phosphotyrosine is present on Tyr-129. The Proton acceptor role is filled by Asp-181. At Ser-185 the chain carries Phosphoserine. Thr-223 is modified (phosphothreonine). Phosphotyrosine is present on Tyr-231.

It belongs to the protein kinase superfamily. Ser/Thr protein kinase family. CRK subfamily.

It catalyses the reaction L-seryl-[protein] + ATP = O-phospho-L-seryl-[protein] + ADP + H(+). It carries out the reaction L-threonyl-[protein] + ATP = O-phospho-L-threonyl-[protein] + ADP + H(+). The sequence is that of Cysteine-rich receptor-like protein kinase 44 from Arabidopsis thaliana (Mouse-ear cress).